The chain runs to 728 residues: 1,4-alpha-glucan branching enzyme GlgB (728 aa).

Aspartate 405 serves as the catalytic Nucleophile. The Proton donor role is filled by glutamate 458.

This sequence belongs to the glycosyl hydrolase 13 family. GlgB subfamily. As to quaternary structure, monomer.

The enzyme catalyses Transfers a segment of a (1-&gt;4)-alpha-D-glucan chain to a primary hydroxy group in a similar glucan chain.. Its pathway is glycan biosynthesis; glycogen biosynthesis. Its function is as follows. Catalyzes the formation of the alpha-1,6-glucosidic linkages in glycogen by scission of a 1,4-alpha-linked oligosaccharide from growing alpha-1,4-glucan chains and the subsequent attachment of the oligosaccharide to the alpha-1,6 position. In Salmonella arizonae (strain ATCC BAA-731 / CDC346-86 / RSK2980), this protein is 1,4-alpha-glucan branching enzyme GlgB.